A 276-amino-acid chain; its full sequence is Natural cytotoxicity triggering receptor 2 (276 aa).

Residues 1–21 form the signal peptide; the sequence is MAWRALHPLLLLLLLFPGSQA. Positions 22–120 constitute an Ig-like domain; that stretch reads QSKAQVLQSV…IYRPSDNSVS (99 aa). Residues 22–192 are Extracellular-facing; that stretch reads QSKAQVLQSV…LRPGPAAPIA (171 aa). Intrachain disulfides connect C40–C109 and C55–C63. 2 stretches are compositionally biased toward polar residues: residues 138–156 and 167–183; these read TSWTPRDLVSSQTQTQSCV and ESPSTIPVPSQPQNSTL. The tract at residues 138–184 is disordered; that stretch reads TSWTPRDLVSSQTQTQSCVPPTAGARQAPESPSTIPVPSQPQNSTLR. The N-linked (GlcNAc...) asparagine glycan is linked to N180. A helical membrane pass occupies residues 193–213; it reads LVPVFCGLLVAKSLVLSALLV. Over 214–276 the chain is Cytoplasmic; it reads WWGDIWWKTM…ISDDDDEHTL (63 aa).

The protein belongs to the natural cytotoxicity receptor (NCR) family. In terms of assembly, interacts with TYROBP/DAP12. Interacts with KMT2E isoform NKp44L. As to expression, selectively expressed by activated NK cells and by in vitro cultured (i.e. activated) TCRg/d lymphoid cells.

The protein resides in the cell membrane. Functionally, cytotoxicity-activating receptor that may contribute to the increased efficiency of activated natural killer (NK) cells to mediate tumor cell lysis. This Homo sapiens (Human) protein is Natural cytotoxicity triggering receptor 2 (NCR2).